A 417-amino-acid chain; its full sequence is Phosphoglycerate kinase 2 (417 aa).

The residue at position 4 (S4) is a Phosphoserine. K11 bears the N6-acetyllysine mark. (2R)-3-phosphoglycerate contacts are provided by V23, D24, F25, N26, Q38, and R39. K48 carries the N6-acetyllysine modification. Positions 62, 63, 65, and 66 each coordinate (2R)-3-phosphoglycerate. N6-acetyllysine occurs at positions 75, 86, and 97. 2 residues coordinate (2R)-3-phosphoglycerate: L122 and R123. Residues K131 and K146 each carry the N6-acetyllysine modification. (2R)-3-phosphoglycerate is bound by residues H170 and R171. Phosphotyrosine is present on Y196. N6-acetyllysine is present on K199. G214 is an ADP binding site. CDP is bound at residue G214. Positions 215 and 216 each coordinate AMP. A215 is an ATP binding site. A215 contributes to the Mg(2+) binding site. A CDP-binding site is contributed by D219. A Mg(2+)-binding site is contributed by D219. Residue K220 participates in AMP binding. Residue K220 participates in ATP binding. G238 is an ADP binding site. Position 238 (G238) interacts with CDP. G239 is a binding site for AMP. An ATP-binding site is contributed by G239. N6-acetyllysine occurs at positions 267 and 291. G313 lines the AMP pocket. G313 serves as a coordination point for ATP. CDP-binding residues include G338, I340, and F343. Residue F343 coordinates ADP. E344 is a binding site for AMP. Residues E344, D375, and T376 each contribute to the ATP site. D375 is a Mg(2+) binding site.

It belongs to the phosphoglycerate kinase family. Monomer. It depends on Mg(2+) as a cofactor. As to expression, testis and sperm. Localized on the principle piece in the sperm (at protein level). Testis-specific.

It localises to the cytoplasm. It carries out the reaction (2R)-3-phosphoglycerate + ATP = (2R)-3-phospho-glyceroyl phosphate + ADP. The protein operates within carbohydrate degradation; glycolysis; pyruvate from D-glyceraldehyde 3-phosphate: step 2/5. Its function is as follows. Essential for sperm motility and male fertility but is not required for the completion of spermatogenesis. The sequence is that of Phosphoglycerate kinase 2 (Pgk2) from Mus musculus (Mouse).